The sequence spans 299 residues: HTH-type transcriptional regulator CysL (299 aa).

An HTH lysR-type domain is found at 1 to 58 (MYYDVLKTFIAVVEEKNFTKAAEKLMISQPSVSLHIKNLEKEFQTALLNRSPKHFTTT). A DNA-binding region (H-T-H motif) is located at residues 18-37 (FTKAAEKLMISQPSVSLHIK).

This sequence belongs to the LysR transcriptional regulatory family.

Its function is as follows. Transcriptional activator of the cysJI operon which is involved in sulfur assimilation. Also negatively regulates its own transcription. The sequence is that of HTH-type transcriptional regulator CysL (cysL) from Bacillus subtilis (strain 168).